Here is a 519-residue protein sequence, read N- to C-terminus: MSVPIVILAIIAIVVGVVGGYYLRKSVHERKLDAAKYTAAGVLAEAKKQAETATKEALLEAKEDSHKYRAEVETELKERRAEVQKQEDRLIQREETLDRKDNSLEKRENSLNRRDKKLSAEEQNLVKKQQQADSLIEKRQAAVEAVAALSQDDARELIISEAKTALASERAKMIKESEETARKTAQANAKDLIVSAIQRSAADMVTETTITVVTLPNDDMKGRIIGREGRNIRTLETLTGIDLIIDDTPEAVVLSGFDPLRREVAKIALEKLIQDGRIHPARIEEMVAKAKKELDEHVRELGEQATFDLGIHSMHPELVKLVGRLNFRISHGQNALAHSIEVAKITGVLAAELGEDVTLAKRAGLLHDIGRAAEHEDDNSYITTGMELTKKYRESSVVVNAIAAQAEETAAQSVIAELVSTADIISATRPGARSDSLESYIHRLDKLETIANEFDGVDHSFAIQAGREVRVIVRPDRISDTDAVVLARDIKQQIEGDLDYPGHVKVSVIREVRSVEYAK.

Residues 3–23 traverse the membrane as a helical segment; the sequence is VPIVILAIIAIVVGVVGGYYL. Residues 92–120 show a composition bias toward basic and acidic residues; the sequence is QREETLDRKDNSLEKRENSLNRRDKKLSA. The tract at residues 92–124 is disordered; sequence QREETLDRKDNSLEKRENSLNRRDKKLSAEEQN. The 64-residue stretch at 209-272 folds into the KH domain; the sequence is TITVVTLPND…EVAKIALEKL (64 aa). In terms of domain architecture, HD spans 335-428; it reads ALAHSIEVAK…VSTADIISAT (94 aa).

The protein belongs to the RNase Y family.

It localises to the cell membrane. In terms of biological role, endoribonuclease that initiates mRNA decay. This Levilactobacillus brevis (strain ATCC 367 / BCRC 12310 / CIP 105137 / JCM 1170 / LMG 11437 / NCIMB 947 / NCTC 947) (Lactobacillus brevis) protein is Ribonuclease Y 1.